A 364-amino-acid polypeptide reads, in one-letter code: tRNA 2-selenouridine synthase (364 aa).

The region spanning 14–137 (LIADTPIIDV…LRQTAIQATI (124 aa)) is the Rhodanese domain. The active-site S-selanylcysteine intermediate is Cys-97.

This sequence belongs to the SelU family. Monomer.

It carries out the reaction 5-methylaminomethyl-2-thiouridine(34) in tRNA + selenophosphate + (2E)-geranyl diphosphate + H2O + H(+) = 5-methylaminomethyl-2-selenouridine(34) in tRNA + (2E)-thiogeraniol + phosphate + diphosphate. It catalyses the reaction 5-methylaminomethyl-2-thiouridine(34) in tRNA + (2E)-geranyl diphosphate = 5-methylaminomethyl-S-(2E)-geranyl-thiouridine(34) in tRNA + diphosphate. The enzyme catalyses 5-methylaminomethyl-S-(2E)-geranyl-thiouridine(34) in tRNA + selenophosphate + H(+) = 5-methylaminomethyl-2-(Se-phospho)selenouridine(34) in tRNA + (2E)-thiogeraniol. The catalysed reaction is 5-methylaminomethyl-2-(Se-phospho)selenouridine(34) in tRNA + H2O = 5-methylaminomethyl-2-selenouridine(34) in tRNA + phosphate. Functionally, involved in the post-transcriptional modification of the uridine at the wobble position (U34) of tRNA(Lys), tRNA(Glu) and tRNA(Gln). Catalyzes the conversion of 2-thiouridine (S2U-RNA) to 2-selenouridine (Se2U-RNA). Acts in a two-step process involving geranylation of 2-thiouridine (S2U) to S-geranyl-2-thiouridine (geS2U) and subsequent selenation of the latter derivative to 2-selenouridine (Se2U) in the tRNA chain. The sequence is that of tRNA 2-selenouridine synthase from Escherichia coli (strain SE11).